Consider the following 262-residue polypeptide: GTP cyclohydrolase 1 type 2 homolog (262 aa).

Residues histidine 65, aspartate 102, histidine 222, and glutamate 225 each contribute to the a divalent metal cation site.

It belongs to the GTP cyclohydrolase I type 2/NIF3 family. In terms of assembly, homohexamer.

This Streptococcus pyogenes serotype M6 (strain ATCC BAA-946 / MGAS10394) protein is GTP cyclohydrolase 1 type 2 homolog.